Here is a 429-residue protein sequence, read N- to C-terminus: 5-methylthioadenosine/S-adenosylhomocysteine deaminase (429 aa).

Residues histidine 65 and histidine 67 each contribute to the Zn(2+) site. Substrate-binding residues include glutamate 94 and histidine 182. Histidine 209 serves as a coordination point for Zn(2+). Residues glutamate 212 and aspartate 297 each coordinate substrate. Position 297 (aspartate 297) interacts with Zn(2+).

Belongs to the metallo-dependent hydrolases superfamily. MTA/SAH deaminase family. It depends on Zn(2+) as a cofactor.

It carries out the reaction S-adenosyl-L-homocysteine + H2O + H(+) = S-inosyl-L-homocysteine + NH4(+). The catalysed reaction is S-methyl-5'-thioadenosine + H2O + H(+) = S-methyl-5'-thioinosine + NH4(+). Its function is as follows. Catalyzes the deamination of 5-methylthioadenosine and S-adenosyl-L-homocysteine into 5-methylthioinosine and S-inosyl-L-homocysteine, respectively. Is also able to deaminate adenosine. This chain is 5-methylthioadenosine/S-adenosylhomocysteine deaminase, found in Clostridium tetani (strain Massachusetts / E88).